The chain runs to 225 residues: PKHD-type hydroxylase Smlt1146 (225 aa).

A Fe2OG dioxygenase domain is found at Lys78–Ser177. Residues His96, Asp98, and His158 each coordinate Fe cation. 2-oxoglutarate is bound at residue Arg168.

Requires Fe(2+) as cofactor. The cofactor is L-ascorbate.

The polypeptide is PKHD-type hydroxylase Smlt1146 (Stenotrophomonas maltophilia (strain K279a)).